The following is a 163-amino-acid chain: Protein-export protein SecB (163 aa).

It belongs to the SecB family. In terms of assembly, homotetramer, a dimer of dimers. One homotetramer interacts with 1 SecA dimer.

It localises to the cytoplasm. One of the proteins required for the normal export of preproteins out of the cell cytoplasm. It is a molecular chaperone that binds to a subset of precursor proteins, maintaining them in a translocation-competent state. It also specifically binds to its receptor SecA. This is Protein-export protein SecB from Brucella canis (strain ATCC 23365 / NCTC 10854 / RM-666).